Here is a 500-residue protein sequence, read N- to C-terminus: Plexin domain-containing protein 1 (500 aa).

Residues 1 to 18 form the signal peptide; it reads MRGELWLLVLVLREAARA. The Extracellular portion of the chain corresponds to 19-426; that stretch reads LSPQPGAGHD…TKGTPVHLGT (408 aa). Disordered stretches follow at residues 20-39 and 46-78; these read SPQP…AAKG and RRAR…DTLP. O-linked (Xyl...) (chondroitin sulfate) serine glycosylation occurs at serine 33. Residues 47–60 show a composition bias toward basic and acidic residues; the sequence is RARESPGHVSEPDR. Residues asparagine 80 and asparagine 197 are each glycosylated (N-linked (GlcNAc...) asparagine). The interval 359–379 is disordered; that stretch reads FQDEDHDSASPDTSFSPYDGD. Over residues 368 to 379 the composition is skewed to polar residues; it reads SPDTSFSPYDGD. Residues 427-447 traverse the membrane as a helical segment; that stretch reads IVGIVLAVLLVAAIILAGIYI. Residues 448–500 lie on the Cytoplasmic side of the membrane; the sequence is NGHPTSNAALFFIERRPHHWPAMKFRSHPDHSTYAEVEPSGHEKEGFMEAEQC. Basic and acidic residues predominate over residues 479 to 494; sequence STYAEVEPSGHEKEGF. Residues 479-500 are disordered; it reads STYAEVEPSGHEKEGFMEAEQC.

The protein belongs to the plexin family. As to quaternary structure, interacts with NID1. May interact with CTTN. N-glycosylated. As to expression, detected in urine (at protein level). Detected in endothelial cells from colorectal cancer, and in endothelial cells from primary cancers of the lung, liver, pancreas, breast and brain. Not detectable in endothelial cells from normal tissue. Expressed in fibrovascular membrane with increased expression in individuals with proliferative diabetic retinopathy.

It localises to the secreted. The protein resides in the cell membrane. The protein localises to the cell junction. It is found in the tight junction. Its subcellular location is the cytoplasm. Plays a critical role in endothelial cell capillary morphogenesis. This Homo sapiens (Human) protein is Plexin domain-containing protein 1 (PLXDC1).